A 389-amino-acid chain; its full sequence is Tryptophan synthase beta chain (389 aa).

Lysine 84 is modified (N6-(pyridoxal phosphate)lysine).

The protein belongs to the TrpB family. Tetramer of two alpha and two beta chains. Requires pyridoxal 5'-phosphate as cofactor.

The enzyme catalyses (1S,2R)-1-C-(indol-3-yl)glycerol 3-phosphate + L-serine = D-glyceraldehyde 3-phosphate + L-tryptophan + H2O. It functions in the pathway amino-acid biosynthesis; L-tryptophan biosynthesis; L-tryptophan from chorismate: step 5/5. In terms of biological role, the beta subunit is responsible for the synthesis of L-tryptophan from indole and L-serine. The polypeptide is Tryptophan synthase beta chain (Methanococcus aeolicus (strain ATCC BAA-1280 / DSM 17508 / OCM 812 / Nankai-3)).